The sequence spans 256 residues: MSFHITPIWMWKGTGNNYAYLLTCDKTKITAIVDPAEPESVIPVIKEKTAKKEIDLQYILTTHHHYDHAGGNEDILSYFPSLKVYGGKNASGVTYTPKDKEIFKVGEVQVEALHTPCHTQDSICYYVSSPSKRAVFTGDTLFTSGCGRFFEGDAKQMDYALNHVLAALPDDTVTYPGHEYTKSNAKFSSTIFSTPELTKLVDFCKNHESTTGHFTIGDEKKFNPFMCLGLESVQKAVGSSDPITVMKKLRDMKNAA.

Residues His-63, His-65, Asp-67, His-68, His-118, and Asp-139 each coordinate Zn(2+). Substrate is bound by residues Arg-148, 178 to 180, and 250 to 253; these read HEY and RDMK. His-178 provides a ligand contact to Zn(2+).

Belongs to the metallo-beta-lactamase superfamily. Glyoxalase II family. It depends on Zn(2+) as a cofactor.

The protein resides in the cytoplasm. It is found in the nucleus. It carries out the reaction an S-(2-hydroxyacyl)glutathione + H2O = a 2-hydroxy carboxylate + glutathione + H(+). It catalyses the reaction (R)-S-lactoylglutathione + H2O = (R)-lactate + glutathione + H(+). Its pathway is secondary metabolite metabolism; methylglyoxal degradation; (R)-lactate from methylglyoxal: step 2/2. Thiolesterase that catalyzes the hydrolysis of S-D-lactoylglutathione to form glutathione and D-lactic acid. Involved in the metabolism of methylglyoxal, a toxic compound for yeast proliferation, by converting methylglyoxal to lactate via S-D-lactoylglutathione by sequential enzyme reactions catalyzed by glyoxalase I and glyoxalase II. The chain is Probable hydroxyacylglutathione hydrolase glo2 (glo2) from Schizosaccharomyces pombe (strain 972 / ATCC 24843) (Fission yeast).